Reading from the N-terminus, the 373-residue chain is Queuine tRNA-ribosyltransferase (373 aa).

D93 serves as the catalytic Proton acceptor. Substrate is bound by residues 93–97 (DSGGF), D147, Q191, and G218. The segment at 249-255 (GVGAPRD) is RNA binding. D268 (nucleophile) is an active-site residue. Residues 273–277 (TRNAR) are RNA binding; important for wobble base 34 recognition. C306, C308, C311, and H337 together coordinate Zn(2+).

Belongs to the queuine tRNA-ribosyltransferase family. Homodimer. Within each dimer, one monomer is responsible for RNA recognition and catalysis, while the other monomer binds to the replacement base PreQ1. The cofactor is Zn(2+).

It carries out the reaction 7-aminomethyl-7-carbaguanine + guanosine(34) in tRNA = 7-aminomethyl-7-carbaguanosine(34) in tRNA + guanine. It functions in the pathway tRNA modification; tRNA-queuosine biosynthesis. Catalyzes the base-exchange of a guanine (G) residue with the queuine precursor 7-aminomethyl-7-deazaguanine (PreQ1) at position 34 (anticodon wobble position) in tRNAs with GU(N) anticodons (tRNA-Asp, -Asn, -His and -Tyr). Catalysis occurs through a double-displacement mechanism. The nucleophile active site attacks the C1' of nucleotide 34 to detach the guanine base from the RNA, forming a covalent enzyme-RNA intermediate. The proton acceptor active site deprotonates the incoming PreQ1, allowing a nucleophilic attack on the C1' of the ribose to form the product. After dissociation, two additional enzymatic reactions on the tRNA convert PreQ1 to queuine (Q), resulting in the hypermodified nucleoside queuosine (7-(((4,5-cis-dihydroxy-2-cyclopenten-1-yl)amino)methyl)-7-deazaguanosine). This Solidesulfovibrio magneticus (strain ATCC 700980 / DSM 13731 / RS-1) (Desulfovibrio magneticus) protein is Queuine tRNA-ribosyltransferase.